Reading from the N-terminus, the 37-residue chain is Large ribosomal subunit protein bL36 (37 aa).

The protein belongs to the bacterial ribosomal protein bL36 family.

This is Large ribosomal subunit protein bL36 from Acidithiobacillus ferrooxidans (strain ATCC 23270 / DSM 14882 / CIP 104768 / NCIMB 8455) (Ferrobacillus ferrooxidans (strain ATCC 23270)).